A 251-amino-acid polypeptide reads, in one-letter code: uncharacterized protein (251 aa).

Position 12–36 (12–36) interacts with NADP(+); sequence VVTGASSGIGEATARTLAAQGFHVV. S136 contributes to the substrate binding site. Y149 acts as the Proton acceptor in catalysis.

It belongs to the short-chain dehydrogenases/reductases (SDR) family.

This is an uncharacterized protein from Mycobacterium tuberculosis (strain CDC 1551 / Oshkosh).